Reading from the N-terminus, the 1117-residue chain is DNA polymerase II large subunit (1117 aa).

The span at 279–294 shows a compositional bias: basic and acidic residues; the sequence is STKEEEKKKEESSENK. The disordered stretch occupies residues 279-299; the sequence is STKEEEKKKEESSENKPKKKA.

Belongs to the archaeal DNA polymerase II family. Heterodimer of a large subunit and a small subunit.

It carries out the reaction DNA(n) + a 2'-deoxyribonucleoside 5'-triphosphate = DNA(n+1) + diphosphate. The enzyme catalyses Exonucleolytic cleavage in the 3'- to 5'-direction to yield nucleoside 5'-phosphates.. In terms of biological role, possesses two activities: a DNA synthesis (polymerase) and an exonucleolytic activity that degrades single-stranded DNA in the 3'- to 5'-direction. Has a template-primer preference which is characteristic of a replicative DNA polymerase. The protein is DNA polymerase II large subunit of Methanosphaera stadtmanae (strain ATCC 43021 / DSM 3091 / JCM 11832 / MCB-3).